Reading from the N-terminus, the 104-residue chain is MTSKTVTRADLASVVCRKVGLSHTESAALVELVLNEICNSLVRGEAVKLSSFATFQVRNKNERIGRNPKTGVEAPISPRRVVTFKAANVLKQRILNSHRARQKK.

This sequence belongs to the bacterial histone-like protein family. As to quaternary structure, heterodimer of an alpha and a beta chain.

Functionally, this protein is one of the two subunits of integration host factor, a specific DNA-binding protein that functions in genetic recombination as well as in transcriptional and translational control. This is Integration host factor subunit alpha from Bartonella quintana (strain Toulouse) (Rochalimaea quintana).